Consider the following 316-residue polypeptide: Ornithine carbamoyltransferase (316 aa).

Residues Ser59–Thr62, Gln86, Arg110, and His137–Gln140 each bind carbamoyl phosphate. Residues Asn168, Asp232, and Ser236–Met237 contribute to the L-ornithine site. Residues Cys273–Leu274 and Arg301 contribute to the carbamoyl phosphate site.

This sequence belongs to the aspartate/ornithine carbamoyltransferase superfamily. OTCase family.

It is found in the cytoplasm. It catalyses the reaction carbamoyl phosphate + L-ornithine = L-citrulline + phosphate + H(+). Its pathway is amino-acid biosynthesis; L-arginine biosynthesis; L-arginine from L-ornithine and carbamoyl phosphate: step 1/3. Functionally, reversibly catalyzes the transfer of the carbamoyl group from carbamoyl phosphate (CP) to the N(epsilon) atom of ornithine (ORN) to produce L-citrulline. This Listeria monocytogenes serotype 4b (strain F2365) protein is Ornithine carbamoyltransferase.